The sequence spans 121 residues: Large ribosomal subunit protein uL18 (121 aa).

This sequence belongs to the universal ribosomal protein uL18 family. In terms of assembly, part of the 50S ribosomal subunit; part of the 5S rRNA/L5/L18/L25 subcomplex. Contacts the 5S and 23S rRNAs.

This is one of the proteins that bind and probably mediate the attachment of the 5S RNA into the large ribosomal subunit, where it forms part of the central protuberance. In Mesomycoplasma hyopneumoniae (strain 232) (Mycoplasma hyopneumoniae), this protein is Large ribosomal subunit protein uL18.